Here is a 406-residue protein sequence, read N- to C-terminus: Putative sodium-coupled neutral amino acid transporter 11 (406 aa).

At 1 to 7 (MKQAGFP) the chain is on the cytoplasmic side. A helical membrane pass occupies residues 8-28 (LGILLLFWVSYVTDFSLVLLI). Asn-44 carries an N-linked (GlcNAc...) asparagine glycan. 6 helical membrane-spanning segments follow: residues 48-68 (GFPGYLLLSVLQFLYPFIAMI), 93-113 (VFIGRHFIIGLSTVTFTLPLS), 121-141 (LGKVSLISTGLTTLILGIVMA), 156-176 (AWVFAKPNAIQAVGVMSFAFI), 202-222 (MSIVISVFICIFFATCGYLTF), and 241-263 (VTFGRFCYGVTVILTYPMECFVT). A glycan (N-linked (GlcNAc...) asparagine) is linked at Asn-275. 3 helical membrane passes run 279-299 (VFHIVVTVMVITVATLVSLLI), 301-321 (CLGIVLELNGVLCATPLIFII), and 340-360 (IMSCVMLPIGAVVMVFGFVMA).

The protein belongs to the amino acid/polyamine transporter 2 family.

It localises to the membrane. Its function is as follows. Putative sodium-dependent amino acid/proton antiporter. This chain is Putative sodium-coupled neutral amino acid transporter 11 (SLC38A11), found in Homo sapiens (Human).